The sequence spans 876 residues: Xylosyltransferase oxt (876 aa).

Residues 1–14 (MEQSVSARWLKRYR) lie on the Cytoplasmic side of the membrane. Residues 15–35 (AFFLILLLIVAIQLFLAYKSL) form a helical; Signal-anchor for type II membrane protein membrane-spanning segment. Residues 36–876 (DIVGGGSGSG…PKSDVDALLK (841 aa)) are Lumenal-facing. Residues 48 to 67 (AAEAPASPPPPHAQARVQPP) are disordered. 4 disulfides stabilise this stretch: cysteine 83-cysteine 111, cysteine 127-cysteine 465, cysteine 484-cysteine 497, and cysteine 486-cysteine 495. N-linked (GlcNAc...) asparagine glycosylation is found at asparagine 131 and asparagine 135. A WSC domain is found at 134–228 (ANVSLGCFKD…FYAMNIYETG (95 aa)). UDP-alpha-D-xylose contacts are provided by residues aspartate 283 and 312–314 (TIW). The N-linked (GlcNAc...) asparagine glycan is linked to asparagine 342. 415-416 (DW) is a binding site for UDP-alpha-D-xylose. UDP-alpha-D-xylose is bound by residues serine 498 and 522–523 (RK). N-linked (GlcNAc...) asparagine glycans are attached at residues asparagine 696 and asparagine 725. A disulfide bridge connects residues cysteine 842 and cysteine 855.

The protein belongs to the glycosyltransferase 14 family. XylT subfamily. The cofactor is Ca(2+). Requires Mn(2+) as cofactor. It depends on Mg(2+) as a cofactor.

It localises to the endoplasmic reticulum membrane. Its subcellular location is the golgi apparatus membrane. It carries out the reaction UDP-alpha-D-xylose + L-seryl-[protein] = 3-O-(beta-D-xylosyl)-L-seryl-[protein] + UDP + H(+). It functions in the pathway glycan metabolism; chondroitin sulfate biosynthesis. It participates in glycan metabolism; heparan sulfate biosynthesis. Catalyzes the first step in biosynthesis of glycosaminoglycan. Transfers D-xylose from UDP-D-xylose to specific serine residues of the core protein. The polypeptide is Xylosyltransferase oxt (Drosophila melanogaster (Fruit fly)).